Reading from the N-terminus, the 448-residue chain is DNA repair protein RadA (448 aa).

Residues 10–27 (CQHCGFTSPKWLGKCVQC) form a C4-type zinc finger. 96 to 103 (GSPGVGKS) contacts ATP. The RadA KNRFG motif signature appears at 253-257 (KNRFG). The lon-protease-like stretch occupies residues 351–448 (DVFINVSGGI…NAVGKIVEWM (98 aa)).

The protein belongs to the RecA family. RadA subfamily.

Functionally, DNA-dependent ATPase involved in processing of recombination intermediates, plays a role in repairing DNA breaks. Stimulates the branch migration of RecA-mediated strand transfer reactions, allowing the 3' invading strand to extend heteroduplex DNA faster. Binds ssDNA in the presence of ADP but not other nucleotides, has ATPase activity that is stimulated by ssDNA and various branched DNA structures, but inhibited by SSB. Does not have RecA's homology-searching function. The polypeptide is DNA repair protein RadA (Helicobacter pylori (strain ATCC 700392 / 26695) (Campylobacter pylori)).